The primary structure comprises 454 residues: Phosphoglucosamine mutase (454 aa).

Catalysis depends on Ser101, which acts as the Phosphoserine intermediate. Mg(2+) is bound by residues Ser101, Asp243, Asp245, and Asp247. Ser101 carries the post-translational modification Phosphoserine.

This sequence belongs to the phosphohexose mutase family. Requires Mg(2+) as cofactor. Post-translationally, activated by phosphorylation.

It carries out the reaction alpha-D-glucosamine 1-phosphate = D-glucosamine 6-phosphate. Functionally, catalyzes the conversion of glucosamine-6-phosphate to glucosamine-1-phosphate. This chain is Phosphoglucosamine mutase, found in Geobacter sp. (strain M21).